We begin with the raw amino-acid sequence, 199 residues long: Protein GrpE (199 aa).

Residues Met1–Thr50 are disordered. Residues Glu11–Ala46 are compositionally biased toward low complexity.

It belongs to the GrpE family. In terms of assembly, homodimer.

It is found in the cytoplasm. In terms of biological role, participates actively in the response to hyperosmotic and heat shock by preventing the aggregation of stress-denatured proteins, in association with DnaK and GrpE. It is the nucleotide exchange factor for DnaK and may function as a thermosensor. Unfolded proteins bind initially to DnaJ; upon interaction with the DnaJ-bound protein, DnaK hydrolyzes its bound ATP, resulting in the formation of a stable complex. GrpE releases ADP from DnaK; ATP binding to DnaK triggers the release of the substrate protein, thus completing the reaction cycle. Several rounds of ATP-dependent interactions between DnaJ, DnaK and GrpE are required for fully efficient folding. The chain is Protein GrpE from Lactiplantibacillus plantarum (strain ATCC BAA-793 / NCIMB 8826 / WCFS1) (Lactobacillus plantarum).